Reading from the N-terminus, the 240-residue chain is 31 kDa outer-membrane immunogenic protein (240 aa).

A signal peptide spans methionine 1–alanine 19. Residues asparagine 48–valine 83 form an epitope recognized by the monoclonal antibody A59/10F09/G10 region.

The protein belongs to the Omp25/RopB family. In terms of assembly, oligomeric.

The protein localises to the cell outer membrane. Functionally, major outer membrane protein associated with peptidoglycans. May function as a porin. This chain is 31 kDa outer-membrane immunogenic protein (omp31), found in Brucella melitensis biotype 1 (strain ATCC 23456 / CCUG 17765 / NCTC 10094 / 16M).